The following is a 553-amino-acid chain: ATP synthase F(1) complex subunit alpha, mitochondrial (553 aa).

The transit peptide at 1–43 directs the protein to the mitochondrion; sequence MLSVRVAAAVVRALPRRAGLVSRNALGSSFIAARNFHASNTHL. Ser-53 and Ser-65 each carry phosphoserine. Ser-76 bears the Phosphoserine; alternate mark. An O-linked (GlcNAc) serine; alternate glycan is attached at Ser-76. The residue at position 106 (Ser-106) is a Phosphoserine. Lys-123, Lys-126, and Lys-132 each carry N6-acetyllysine. At Thr-134 the chain carries Phosphothreonine. Lys-161 is subject to N6-acetyllysine; alternate. Lys-161 carries the post-translational modification N6-succinyllysine; alternate. Ser-166 bears the Phosphoserine mark. Residue Lys-167 is modified to N6-acetyllysine; alternate. Lys-167 bears the N6-succinyllysine; alternate mark. Position 184 is a phosphoserine (Ser-184). At Arg-204 the chain carries Omega-N-methylarginine. Residues Gln-215, Gly-217, Lys-218, Thr-219, and Ser-220 each coordinate ATP. Thr-219 serves as a coordination point for Mg(2+). Lys-230 and Lys-239 each carry N6-acetyllysine; alternate. 2 positions are modified to N6-succinyllysine; alternate: Lys-230 and Lys-239. The residue at position 240 (Lys-240) is an N6-acetyllysine. An N6-acetyllysine; alternate mark is found at Lys-261 and Lys-305. 2 positions are modified to N6-succinyllysine; alternate: Lys-261 and Lys-305. Asp-312 contributes to the Mg(2+) binding site. Lys-427 is subject to N6-acetyllysine; alternate. Lys-427 is subject to N6-succinyllysine; alternate. An N6-acetyllysine modification is found at Lys-434. ATP is bound by residues Gln-473 and Gln-475. N6-acetyllysine; alternate is present on residues Lys-498, Lys-506, Lys-531, and Lys-539. Residues Lys-498, Lys-506, Lys-531, and Lys-539 each carry the N6-succinyllysine; alternate modification. Lys-541 bears the N6-acetyllysine mark.

Belongs to the ATPase alpha/beta chains family. Homotrimer. Component of the ATP synthase complex composed at least of ATP5F1A/subunit alpha, ATP5F1B/subunit beta, ATP5MC1/subunit c (homooctomer), MT-ATP6/subunit a, MT-ATP8/subunit 8, ATP5ME/subunit e, ATP5MF/subunit f, ATP5MG/subunit g, ATP5MK/subunit k, ATP5MJ/subunit j, ATP5F1C/subunit gamma, ATP5F1D/subunit delta, ATP5F1E/subunit epsilon, ATP5PF/subunit F6, ATP5PB/subunit b, ATP5PD/subunit d, ATP5PO/subunit OSCP. ATP synthase complex consists of a soluble F(1) head domain (subunits alpha(3) and beta(3)) - the catalytic core - and a membrane F(0) domain - the membrane proton channel (subunits c, a, 8, e, f, g, k and j). These two domains are linked by a central stalk (subunits gamma, delta, and epsilon) rotating inside the F1 region and a stationary peripheral stalk (subunits F6, b, d, and OSCP). Interacts with ATPAF2. Interacts with HRG; the interaction occurs on the surface of T-cells and alters the cell morphology when associated with concanavalin (in vitro). Interacts with PLG (angiostatin peptide); the interaction inhibits most of the angiogenic properties of angiostatin. Interacts with BLOC1S1. Interacts with BCL2L1 isoform BCL-X(L); the interaction mediates the association of BCL2L1 isoform BCL-X(L) with the mitochondrial membrane F(1)F(0) ATP synthase and enhances neurons metabolic efficiency. Interacts with CLN5 and PPT1. Interacts with S100A1; this interaction increases F1-ATPase activity. Interacts with ABCB7; this interaction allows the regulation of cellular iron homeostasis and cellular reactive oxygen species (ROS) levels in cardiomyocytes. Post-translationally, acetylated on lysine residues. BLOC1S1 is required for acetylation.

It is found in the mitochondrion inner membrane. Its subcellular location is the cell membrane. In terms of biological role, subunit alpha, of the mitochondrial membrane ATP synthase complex (F(1)F(0) ATP synthase or Complex V) that produces ATP from ADP in the presence of a proton gradient across the membrane which is generated by electron transport complexes of the respiratory chain. ATP synthase complex consist of a soluble F(1) head domain - the catalytic core - and a membrane F(1) domain - the membrane proton channel. These two domains are linked by a central stalk rotating inside the F(1) region and a stationary peripheral stalk. During catalysis, ATP synthesis in the catalytic domain of F(1) is coupled via a rotary mechanism of the central stalk subunits to proton translocation. In vivo, can only synthesize ATP although its ATP hydrolase activity can be activated artificially in vitro. With the catalytic subunit beta (ATP5F1B), forms the catalytic core in the F(1) domain. Subunit alpha does not bear the catalytic high-affinity ATP-binding sites. The chain is ATP synthase F(1) complex subunit alpha, mitochondrial from Pan troglodytes (Chimpanzee).